The primary structure comprises 465 residues: Cysteine--tRNA ligase 2 (465 aa).

Cysteine 30 serves as a coordination point for Zn(2+). Positions 32-42 (ITVYDYCHVGH) match the 'HIGH' region motif. Zn(2+) is bound by residues cysteine 214, histidine 239, and glutamate 243. Residues 271–275 (KMSKS) carry the 'KMSKS' region motif. Position 274 (lysine 274) interacts with ATP.

The protein belongs to the class-I aminoacyl-tRNA synthetase family. In terms of assembly, monomer. The cofactor is Zn(2+).

It is found in the cytoplasm. It catalyses the reaction tRNA(Cys) + L-cysteine + ATP = L-cysteinyl-tRNA(Cys) + AMP + diphosphate. In Burkholderia lata (strain ATCC 17760 / DSM 23089 / LMG 22485 / NCIMB 9086 / R18194 / 383), this protein is Cysteine--tRNA ligase 2.